The chain runs to 94 residues: Large ribosomal subunit protein uL23 (94 aa).

Belongs to the universal ribosomal protein uL23 family. In terms of assembly, part of the 50S ribosomal subunit. Contacts protein L29, and trigger factor when it is bound to the ribosome.

In terms of biological role, one of the early assembly proteins it binds 23S rRNA. One of the proteins that surrounds the polypeptide exit tunnel on the outside of the ribosome. Forms the main docking site for trigger factor binding to the ribosome. This is Large ribosomal subunit protein uL23 from Roseiflexus castenholzii (strain DSM 13941 / HLO8).